Reading from the N-terminus, the 196-residue chain is [1-hydroxy-2-(trimethylamino)ethyl]phosphonate dioxygenase (glycine-betaine-forming) (196 aa).

Tyrosine 30 is a [(1R)-1-hydroxy-2-(trimethylamino)ethyl]phosphonate binding site. Fe cation-binding residues include tyrosine 30, histidine 40, histidine 64, and aspartate 65. The region spanning 37 to 156 (MAEHMLQGAT…VAEFEKNPNL (120 aa)) is the HD domain. [(1R)-1-hydroxy-2-(trimethylamino)ethyl]phosphonate contacts are provided by histidine 68, histidine 86, histidine 109, lysine 113, serine 131, serine 134, and arginine 163. Residues histidine 86 and histidine 109 each contribute to the Fe cation site. Position 166 (aspartate 166) interacts with Fe cation.

Fe cation is required as a cofactor.

The catalysed reaction is [(1R)-1-hydroxy-2-(trimethylamino)ethyl]phosphonate + O2 = glycine betaine + phosphate + 2 H(+). Involved in the degradation of the naturally occurring organophosphonate 2-(trimethylammonio)ethylphosphonate (TMAEP). Catalyzes the O(2)-dependent cleavage of (R)-1-hydroxy-2-(trimethylammonio)ethylphosphonate (OH-TMAEP) to yield glycine betaine and phosphate. Is highly specific for its N-trimethylated substrate. In Leisingera caerulea (Phaeobacter caeruleus), this protein is [1-hydroxy-2-(trimethylamino)ethyl]phosphonate dioxygenase (glycine-betaine-forming).